The following is a 232-amino-acid chain: Ubiquinone biosynthesis O-methyltransferase (232 aa).

Residues arginine 36, glycine 55, aspartate 76, and methionine 120 each coordinate S-adenosyl-L-methionine.

It belongs to the methyltransferase superfamily. UbiG/COQ3 family.

The enzyme catalyses a 3-demethylubiquinol + S-adenosyl-L-methionine = a ubiquinol + S-adenosyl-L-homocysteine + H(+). It catalyses the reaction a 3-(all-trans-polyprenyl)benzene-1,2-diol + S-adenosyl-L-methionine = a 2-methoxy-6-(all-trans-polyprenyl)phenol + S-adenosyl-L-homocysteine + H(+). The protein operates within cofactor biosynthesis; ubiquinone biosynthesis. In terms of biological role, O-methyltransferase that catalyzes the 2 O-methylation steps in the ubiquinone biosynthetic pathway. In Burkholderia thailandensis (strain ATCC 700388 / DSM 13276 / CCUG 48851 / CIP 106301 / E264), this protein is Ubiquinone biosynthesis O-methyltransferase.